Consider the following 214-residue polypeptide: Adenylate kinase (214 aa).

10 to 15 (GAGKGT) provides a ligand contact to ATP. The tract at residues 30–59 (STGDMLRAAIKAGTELGKQAKAVIDAGQLV) is NMP. AMP contacts are provided by residues Thr31, Arg36, 57 to 59 (QLV), 85 to 88 (GFPR), and Gln92. An LID region spans residues 122-159 (GRRAHLPSGRTYHVVYNPPKVEGKDDVTGEDLVIREDD). ATP contacts are provided by residues Arg123 and 132–133 (TY). AMP-binding residues include Arg156 and Arg167. Lys200 serves as a coordination point for ATP.

Belongs to the adenylate kinase family. As to quaternary structure, monomer.

Its subcellular location is the cytoplasm. The enzyme catalyses AMP + ATP = 2 ADP. It functions in the pathway purine metabolism; AMP biosynthesis via salvage pathway; AMP from ADP: step 1/1. Functionally, catalyzes the reversible transfer of the terminal phosphate group between ATP and AMP. Plays an important role in cellular energy homeostasis and in adenine nucleotide metabolism. The sequence is that of Adenylate kinase from Vibrio cholerae serotype O1 (strain ATCC 39541 / Classical Ogawa 395 / O395).